Here is a 419-residue protein sequence, read N- to C-terminus: Peptide chain release factor subunit 1 (419 aa).

Belongs to the eukaryotic release factor 1 family. As to quaternary structure, heterodimer of two subunits, one of which binds GTP.

The protein resides in the cytoplasm. In terms of biological role, directs the termination of nascent peptide synthesis (translation) in response to the termination codons UAA, UAG and UGA. This is Peptide chain release factor subunit 1 from Methanococcus vannielii (strain ATCC 35089 / DSM 1224 / JCM 13029 / OCM 148 / SB).